The primary structure comprises 325 residues: tRNA N6-adenosine threonylcarbamoyltransferase (325 aa).

Positions 107, 111, and 127 each coordinate Fe cation. Substrate contacts are provided by residues 127–131, Asp-159, Gly-172, Glu-176, and Asn-257; that span reads YVSGG. Position 285 (Asp-285) interacts with Fe cation.

It belongs to the KAE1 / TsaD family. As to quaternary structure, monomer. Component of the KEOPS complex that consists of Kae1, Bud32, Cgi121 and Pcc1; the whole complex dimerizes. It depends on Fe(2+) as a cofactor.

The protein resides in the cytoplasm. The catalysed reaction is L-threonylcarbamoyladenylate + adenosine(37) in tRNA = N(6)-L-threonylcarbamoyladenosine(37) in tRNA + AMP + H(+). Required for the formation of a threonylcarbamoyl group on adenosine at position 37 (t(6)A37) in tRNAs that read codons beginning with adenine. Is a component of the KEOPS complex that is probably involved in the transfer of the threonylcarbamoyl moiety of threonylcarbamoyl-AMP (TC-AMP) to the N6 group of A37. Kae1 likely plays a direct catalytic role in this reaction, but requires other protein(s) of the complex to fulfill this activity. The protein is tRNA N6-adenosine threonylcarbamoyltransferase of Thermococcus kodakarensis (strain ATCC BAA-918 / JCM 12380 / KOD1) (Pyrococcus kodakaraensis (strain KOD1)).